The sequence spans 298 residues: Lipoyl synthase (298 aa).

Residues cysteine 43, cysteine 48, cysteine 54, cysteine 69, cysteine 73, cysteine 76, and serine 280 each coordinate [4Fe-4S] cluster. Positions 55–269 constitute a Radical SAM core domain; the sequence is FSSGTATFLI…AACGRGMGIP (215 aa).

The protein belongs to the radical SAM superfamily. Lipoyl synthase family. [4Fe-4S] cluster serves as cofactor.

It is found in the cytoplasm. The enzyme catalyses [[Fe-S] cluster scaffold protein carrying a second [4Fe-4S](2+) cluster] + N(6)-octanoyl-L-lysyl-[protein] + 2 oxidized [2Fe-2S]-[ferredoxin] + 2 S-adenosyl-L-methionine + 4 H(+) = [[Fe-S] cluster scaffold protein] + N(6)-[(R)-dihydrolipoyl]-L-lysyl-[protein] + 4 Fe(3+) + 2 hydrogen sulfide + 2 5'-deoxyadenosine + 2 L-methionine + 2 reduced [2Fe-2S]-[ferredoxin]. The protein operates within protein modification; protein lipoylation via endogenous pathway; protein N(6)-(lipoyl)lysine from octanoyl-[acyl-carrier-protein]: step 2/2. Catalyzes the radical-mediated insertion of two sulfur atoms into the C-6 and C-8 positions of the octanoyl moiety bound to the lipoyl domains of lipoate-dependent enzymes, thereby converting the octanoylated domains into lipoylated derivatives. In Nitratidesulfovibrio vulgaris (strain DP4) (Desulfovibrio vulgaris), this protein is Lipoyl synthase.